The chain runs to 219 residues: Proteasome subunit beta type-9 (219 aa).

Positions 1–20 are cleaved as a propeptide — removed in mature form; it reads MLRAGAPTAGSFRTEEVHTG. Thr21 (nucleophile) is an active-site residue. Residues Lys53 and Lys109 each carry the N6-acetyllysine modification.

This sequence belongs to the peptidase T1B family. The 26S proteasome consists of a 20S proteasome core and two 19S regulatory subunits. The 20S proteasome core is composed of 28 subunits that are arranged in four stacked rings, resulting in a barrel-shaped structure. The two end rings are each formed by seven alpha subunits, and the two central rings are each formed by seven beta subunits. The catalytic chamber with the active sites is on the inside of the barrel. Component of the immunoproteasome, where it displaces the equivalent housekeeping subunit PSMB6. Component of the spermatoproteasome, a form of the proteasome specifically found in testis. Autocleaved. The resulting N-terminal Thr residue of the mature subunit is responsible for the nucleophile proteolytic activity.

The protein localises to the cytoplasm. It is found in the nucleus. It carries out the reaction Cleavage of peptide bonds with very broad specificity.. Its function is as follows. The proteasome is a multicatalytic proteinase complex which is characterized by its ability to cleave peptides with Arg, Phe, Tyr, Leu, and Glu adjacent to the leaving group at neutral or slightly basic pH. The proteasome has an ATP-dependent proteolytic activity. This subunit is involved in antigen processing to generate class I binding peptides. This Mus musculus bactrianus (Southwestern Asian house mouse) protein is Proteasome subunit beta type-9 (Psmb9).